A 956-amino-acid polypeptide reads, in one-letter code: Outer capsid protein VP2 (956 aa).

This sequence belongs to the orbivirus VP2 family.

The protein localises to the virion. The VP2 protein is one of the two proteins (with VP5) which constitute the virus particle outer capsid. It is the major target of the host immunogenic response. Responsible for viral attachment to target host cell, probably by binding to sialic acid. This attachment induces virion internalization predominantly through clathrin-dependent endocytosis. In Bluetongue virus 11 (isolate USA) (BTV 11), this protein is Outer capsid protein VP2 (Segment-2).